The following is a 484-amino-acid chain: Aspartyl/glutamyl-tRNA(Asn/Gln) amidotransferase subunit B (484 aa).

Belongs to the GatB/GatE family. GatB subfamily. Heterotrimer of A, B and C subunits.

The catalysed reaction is L-glutamyl-tRNA(Gln) + L-glutamine + ATP + H2O = L-glutaminyl-tRNA(Gln) + L-glutamate + ADP + phosphate + H(+). It catalyses the reaction L-aspartyl-tRNA(Asn) + L-glutamine + ATP + H2O = L-asparaginyl-tRNA(Asn) + L-glutamate + ADP + phosphate + 2 H(+). In terms of biological role, allows the formation of correctly charged Asn-tRNA(Asn) or Gln-tRNA(Gln) through the transamidation of misacylated Asp-tRNA(Asn) or Glu-tRNA(Gln) in organisms which lack either or both of asparaginyl-tRNA or glutaminyl-tRNA synthetases. The reaction takes place in the presence of glutamine and ATP through an activated phospho-Asp-tRNA(Asn) or phospho-Glu-tRNA(Gln). This is Aspartyl/glutamyl-tRNA(Asn/Gln) amidotransferase subunit B from Anaeromyxobacter dehalogenans (strain 2CP-C).